Reading from the N-terminus, the 589-residue chain is Aspartate--tRNA ligase (589 aa).

Glutamate 174 provides a ligand contact to L-aspartate. The aspartate stretch occupies residues 198–201; the sequence is QLFK. Arginine 220 is a binding site for L-aspartate. Residues 220-222 and glutamine 229 contribute to the ATP site; that span reads RDE. Position 448 (histidine 448) interacts with L-aspartate. Residue glutamate 483 coordinates ATP. Arginine 490 serves as a coordination point for L-aspartate. An ATP-binding site is contributed by 535–538; the sequence is GIDR.

It belongs to the class-II aminoacyl-tRNA synthetase family. Type 1 subfamily. In terms of assembly, homodimer.

It localises to the cytoplasm. It carries out the reaction tRNA(Asp) + L-aspartate + ATP = L-aspartyl-tRNA(Asp) + AMP + diphosphate. Catalyzes the attachment of L-aspartate to tRNA(Asp) in a two-step reaction: L-aspartate is first activated by ATP to form Asp-AMP and then transferred to the acceptor end of tRNA(Asp). This chain is Aspartate--tRNA ligase, found in Xylella fastidiosa (strain M23).